The primary structure comprises 634 residues: Carbon monoxide dehydrogenase 2 (634 aa).

The [4Fe-4S] cluster site is built by C44, C53, C56, C61, and C73. [Ni-4Fe-5S] cluster-binding residues include H264, C343, C453, C484, and C525.

The protein belongs to the Ni-containing carbon monoxide dehydrogenase family. Homodimer. It depends on [4Fe-4S] cluster as a cofactor. [Ni-4Fe-5S] cluster serves as cofactor.

The catalysed reaction is CO + 2 oxidized [2Fe-2S]-[ferredoxin] + H2O = 2 reduced [2Fe-2S]-[ferredoxin] + CO2 + 2 H(+). Functionally, CODH oxidizes carbon monoxide coupled, via CooF, to the reduction of a hydrogen cation by a hydrogenase (possibly CooH). This Methanosarcina mazei (strain ATCC BAA-159 / DSM 3647 / Goe1 / Go1 / JCM 11833 / OCM 88) (Methanosarcina frisia) protein is Carbon monoxide dehydrogenase 2 (cooS2).